Consider the following 732-residue polypeptide: Elongation factor 2 (732 aa).

One can recognise a tr-type G domain in the interval Glu-19 to Ile-260. Residues Ala-28 to Thr-35, Asp-94 to His-98, and Asn-148 to Asp-151 contribute to the GTP site. The residue at position 597 (His-597) is a Diphthamide.

This sequence belongs to the TRAFAC class translation factor GTPase superfamily. Classic translation factor GTPase family. EF-G/EF-2 subfamily.

Its subcellular location is the cytoplasm. In terms of biological role, catalyzes the GTP-dependent ribosomal translocation step during translation elongation. During this step, the ribosome changes from the pre-translocational (PRE) to the post-translocational (POST) state as the newly formed A-site-bound peptidyl-tRNA and P-site-bound deacylated tRNA move to the P and E sites, respectively. Catalyzes the coordinated movement of the two tRNA molecules, the mRNA and conformational changes in the ribosome. This Pyrococcus abyssi (strain GE5 / Orsay) protein is Elongation factor 2 (fusA).